We begin with the raw amino-acid sequence, 272 residues long: ATP synthase subunit a (272 aa).

Transmembrane regions (helical) follow at residues 41–61, 101–121, 147–167, 221–241, and 243–263; these read VLNI…LVLF, VIAP…FMDL, DVNI…FYSI, LIFI…LSVP, and AIFH…LTIV.

This sequence belongs to the ATPase A chain family. In terms of assembly, F-type ATPases have 2 components, CF(1) - the catalytic core - and CF(0) - the membrane proton channel. CF(1) has five subunits: alpha(3), beta(3), gamma(1), delta(1), epsilon(1). CF(0) has three main subunits: a(1), b(2) and c(9-12). The alpha and beta chains form an alternating ring which encloses part of the gamma chain. CF(1) is attached to CF(0) by a central stalk formed by the gamma and epsilon chains, while a peripheral stalk is formed by the delta and b chains.

It localises to the cell inner membrane. Its function is as follows. Key component of the proton channel; it plays a direct role in the translocation of protons across the membrane. The protein is ATP synthase subunit a of Erwinia tasmaniensis (strain DSM 17950 / CFBP 7177 / CIP 109463 / NCPPB 4357 / Et1/99).